We begin with the raw amino-acid sequence, 699 residues long: Elongation factor G (699 aa).

The 281-residue stretch at Glu-8 to Val-288 folds into the tr-type G domain. GTP contacts are provided by residues Ala-17 to Thr-24, Asp-86 to His-90, and Asn-140 to Asp-143.

Belongs to the TRAFAC class translation factor GTPase superfamily. Classic translation factor GTPase family. EF-G/EF-2 subfamily.

It is found in the cytoplasm. Functionally, catalyzes the GTP-dependent ribosomal translocation step during translation elongation. During this step, the ribosome changes from the pre-translocational (PRE) to the post-translocational (POST) state as the newly formed A-site-bound peptidyl-tRNA and P-site-bound deacylated tRNA move to the P and E sites, respectively. Catalyzes the coordinated movement of the two tRNA molecules, the mRNA and conformational changes in the ribosome. The sequence is that of Elongation factor G from Sinorhizobium medicae (strain WSM419) (Ensifer medicae).